A 143-amino-acid polypeptide reads, in one-letter code: Large ribosomal subunit protein uL15 (143 aa).

The interval 1–59 (MELNTITPGQGAKHAKRRVGRGIGSGLGKTAGRGHKGQKSRSGGYHKVGFEGGQMPMQR) is disordered. The segment covering 21-31 (RGIGSGLGKTA) has biased composition (gly residues).

It belongs to the universal ribosomal protein uL15 family. In terms of assembly, part of the 50S ribosomal subunit.

Its function is as follows. Binds to the 23S rRNA. This Polaromonas naphthalenivorans (strain CJ2) protein is Large ribosomal subunit protein uL15.